The sequence spans 354 residues: DNA polymerase IV (354 aa).

The UmuC domain maps to 6–187; it reads IIHVDCDCFY…LPVARLHGVG (182 aa). Residues aspartate 10 and aspartate 105 each coordinate Mg(2+). The active site involves glutamate 106.

The protein belongs to the DNA polymerase type-Y family. In terms of assembly, monomer. Requires Mg(2+) as cofactor.

The protein resides in the cytoplasm. The enzyme catalyses DNA(n) + a 2'-deoxyribonucleoside 5'-triphosphate = DNA(n+1) + diphosphate. In terms of biological role, poorly processive, error-prone DNA polymerase involved in untargeted mutagenesis. Copies undamaged DNA at stalled replication forks, which arise in vivo from mismatched or misaligned primer ends. These misaligned primers can be extended by PolIV. Exhibits no 3'-5' exonuclease (proofreading) activity. May be involved in translesional synthesis, in conjunction with the beta clamp from PolIII. The chain is DNA polymerase IV from Pseudomonas putida (strain ATCC 700007 / DSM 6899 / JCM 31910 / BCRC 17059 / LMG 24140 / F1).